The chain runs to 799 residues: Potassium transporter 21 (799 aa).

At 1-56 the chain is on the cytoplasmic side; the sequence is MDPGVEKKKQQMELVDVESGGLPVERQDSLFREAVRAEHAGAAHWDEQDSWGRTMS. Residues 57-77 traverse the membrane as a helical segment; the sequence is LAFQCVGILYGDIGTSSLYVY. Topologically, residues 78–93 are extracellular; that stretch reads SSTFEHGIGHPDDVVG. A helical membrane pass occupies residues 94-114; sequence VLSLIVYSFMLFTVIKIVFVA. Topologically, residues 115 to 181 are cytoplasmic; sequence LHANDHGDGG…QLLEASKAAK (67 aa). A helical transmembrane segment spans residues 182–202; sequence ISLFLLTILAIAMVISDAVLT. Residues 203–219 are Extracellular-facing; it reads PPISVLSAVGGLREKVP. Residues 220–240 traverse the membrane as a helical segment; it reads HLTTDQIVWITVAILVVLFAI. Residues 241-251 are Cytoplasmic-facing; it reads QRYGTDKVGYS. The chain crosses the membrane as a helical span at residues 252 to 272; the sequence is FAPIILLWLLLIGATGLYNLI. The Extracellular segment spans residues 273-301; it reads KHDISVLRAFNPKYIIDYFRRNKKEGWVS. The helical transmembrane segment at 302–322 threads the bilayer; it reads LGSILLCFTGSEALFANLGYF. Topologically, residues 323–328 are cytoplasmic; it reads SIRSIQ. A helical transmembrane segment spans residues 329-349; it reads LSFSFALLPSVLLTYIGQAAF. Topologically, residues 350-362 are extracellular; that stretch reads LSKNPKNVANTFF. Residues 363–383 form a helical membrane-spanning segment; the sequence is AATPISLFWPTFIMAIAASII. The Cytoplasmic segment spans residues 384-420; it reads GSQAMISCAFATVSHLQSLSCFPRVKILHTSKRFPGQ. The helical transmembrane segment at 421–441 threads the bilayer; sequence LYIPGVNFLLCVAACVVTVSF. Topologically, residues 442 to 452 are extracellular; that stretch reads KTTVIIGKAHE. Residues 453–473 form a helical membrane-spanning segment; the sequence is ICVILVMIITTLLMTIVMLLV. At 474–475 the chain is on the cytoplasmic side; sequence WK. The helical transmembrane segment at 476–496 threads the bilayer; sequence INILWVALFFITFTSTEAVYL. The Extracellular segment spans residues 497-508; the sequence is SSVLYKFTHGPY. A helical transmembrane segment spans residues 509–529; sequence VPVAMSVVLMVVMIVWHYVHV. Residues 530–799 lie on the Cytoplasmic side of the membrane; that stretch reads KRYKYELEHT…LLKVGISYEI (270 aa).

Belongs to the HAK/KUP transporter (TC 2.A.72.3) family.

The protein localises to the membrane. Its function is as follows. High-affinity potassium transporter. This Oryza sativa subsp. japonica (Rice) protein is Potassium transporter 21 (HAK21).